The chain runs to 553 residues: Ergothioneine transport permease/ergothioneine binding protein EgtU (553 aa).

Residues 57-236 (LAQHFIIVAL…LFSVLADKFV (180 aa)) form the ABC transmembrane type-1 domain. The next 6 membrane-spanning stretches (helical) occupy residues 61-81 (FIIV…IGVF), 98-118 (FLYT…IGVG), 122-142 (ALLV…YNAL), 182-202 (IAVV…AGGL), 219-239 (VAGS…VSVF), and 261-281 (VYTN…WLIP). Topologically, residues 282–553 (RNAIEEKPLV…AKDFLERLGL (272 aa)) are periplasmic. Positions 288–549 (KPLVVATKPS…PKIVAKDFLE (262 aa)) are ergothioneine binding domain.

The protein in the N-terminal section; belongs to the binding-protein-dependent transport system permease family. It in the C-terminal section; belongs to the OsmX family. In terms of assembly, the complex is composed of two ATP-binding proteins (EgtV) and two transmembrane proteins (EgtU).

The protein localises to the cell inner membrane. In terms of biological role, part of the ABC transporter complex EgtUV involved in the uptake of ergothioneine (EGT), a natural low-molecular weight (LMW) thiol antioxidant which protects H.pylori against bleach stress. Responsible for the translocation of the substrate across the membrane. Also contains a C-terminal periplasmic solute-binding domain (SBD) which binds to ergothioneine with low-micromolar affinity. Cannot bind the structurally similar compounds glycine betaine, choline, proline, carnitine or histidine. In Helicobacter pylori (strain G27), this protein is Ergothioneine transport permease/ergothioneine binding protein EgtU.